A 193-amino-acid chain; its full sequence is Ribosome maturation factor RimM (193 aa).

In terms of domain architecture, PRC barrel spans 100–173 (DDEFYYADLE…TLLIDPLAAG (74 aa)).

The protein belongs to the RimM family. Binds ribosomal protein uS19.

It localises to the cytoplasm. An accessory protein needed during the final step in the assembly of 30S ribosomal subunit, possibly for assembly of the head region. Essential for efficient processing of 16S rRNA. May be needed both before and after RbfA during the maturation of 16S rRNA. It has affinity for free ribosomal 30S subunits but not for 70S ribosomes. The chain is Ribosome maturation factor RimM from Rhizobium etli (strain CIAT 652).